The primary structure comprises 86 residues: uncharacterized protein (86 aa).

Positions 1 to 21 (MLSNSTSRNRHSKHNKKNTRE) are disordered. Residues 8 to 17 (RNRHSKHNKK) show a composition bias toward basic residues.

This is an uncharacterized protein from Acidianus convivator (ATV).